Consider the following 394-residue polypeptide: Mucosal addressin cell adhesion molecule 1 (394 aa).

The N-terminal stretch at 1–19 (MEPILALLLALGPFQLSRG) is a signal peptide. 3 consecutive Ig-like domains span residues 20–107 (QSFQ…ILVY), 108–225 (AFPD…TSPE), and 256–345 (PSTP…YVTG). Topologically, residues 20 to 353 (QSFQVNPPEP…TGQVIPNPSS (334 aa)) are extracellular. N-linked (GlcNAc...) asparagine glycosylation occurs at Asn42. Disulfide bonds link Cys43-Cys89, Cys47-Cys93, and Cys130-Cys198. The interval 219 to 255 (QSQTSPEPPSTTSAKPYILTSSHTTKAVSTGLSSVAL) is mucin-like. Cysteines 282 and 330 form a disulfide. Residues 354 to 374 (MVALWIGSLVLGLLALAFLAY) form a helical membrane-spanning segment. At 375–394 (CLWKRYRPGPLPDSSSCTLL) the chain is on the cytoplasmic side.

In terms of assembly, homodimer. As to expression, detected in Peyer patches and mesenteric lymph nodes but not in spleen.

Its subcellular location is the membrane. Cell adhesion leukocyte receptor expressed by mucosal venules, helps to direct lymphocyte traffic into mucosal tissues including the Peyer patches and the intestinal lamina propria. It can bind both the integrin alpha-4/beta-7 and L-selectin, regulating both the passage and retention of leukocytes. The polypeptide is Mucosal addressin cell adhesion molecule 1 (Madcam1) (Rattus norvegicus (Rat)).